Here is a 419-residue protein sequence, read N- to C-terminus: L-rhamnose isomerase (419 aa).

Mn(2+) is bound by residues histidine 262, aspartate 294, and aspartate 296.

This sequence belongs to the rhamnose isomerase family. Homotetramer. The cofactor is Mn(2+).

Its subcellular location is the cytoplasm. The enzyme catalyses L-rhamnopyranose = L-rhamnulose. It participates in carbohydrate degradation; L-rhamnose degradation; glycerone phosphate from L-rhamnose: step 1/3. Its function is as follows. Catalyzes the interconversion of L-rhamnose and L-rhamnulose. In Escherichia coli O81 (strain ED1a), this protein is L-rhamnose isomerase.